We begin with the raw amino-acid sequence, 158 residues long: Transcription elongation factor GreA (158 aa).

Positions 47–73 form a coiled coil; the sequence is AEYHAAREKQSFIEGRIQELQAKLARA.

This sequence belongs to the GreA/GreB family.

Functionally, necessary for efficient RNA polymerase transcription elongation past template-encoded arresting sites. The arresting sites in DNA have the property of trapping a certain fraction of elongating RNA polymerases that pass through, resulting in locked ternary complexes. Cleavage of the nascent transcript by cleavage factors such as GreA or GreB allows the resumption of elongation from the new 3'terminus. GreA releases sequences of 2 to 3 nucleotides. The chain is Transcription elongation factor GreA from Thermodesulfovibrio yellowstonii (strain ATCC 51303 / DSM 11347 / YP87).